Here is a 106-residue protein sequence, read N- to C-terminus: UPF0122 protein Exig_1902 (106 aa).

This sequence belongs to the UPF0122 family.

Functionally, might take part in the signal recognition particle (SRP) pathway. This is inferred from the conservation of its genetic proximity to ftsY/ffh. May be a regulatory protein. This chain is UPF0122 protein Exig_1902, found in Exiguobacterium sibiricum (strain DSM 17290 / CCUG 55495 / CIP 109462 / JCM 13490 / 255-15).